The following is a 788-amino-acid chain: Endonuclease MutS2 (788 aa).

332–339 (GPNTGGKT) provides a ligand contact to ATP. The region spanning 713 to 788 (IDLRGLDSEE…GTGVTVVELK (76 aa)) is the Smr domain.

This sequence belongs to the DNA mismatch repair MutS family. MutS2 subfamily. As to quaternary structure, homodimer. Binds to stalled ribosomes, contacting rRNA.

Its function is as follows. Endonuclease that is involved in the suppression of homologous recombination and thus may have a key role in the control of bacterial genetic diversity. Functionally, acts as a ribosome collision sensor, splitting the ribosome into its 2 subunits. Detects stalled/collided 70S ribosomes which it binds and splits by an ATP-hydrolysis driven conformational change. Acts upstream of the ribosome quality control system (RQC), a ribosome-associated complex that mediates the extraction of incompletely synthesized nascent chains from stalled ribosomes and their subsequent degradation. Probably generates substrates for RQC. The protein is Endonuclease MutS2 of Clostridium acetobutylicum (strain ATCC 824 / DSM 792 / JCM 1419 / IAM 19013 / LMG 5710 / NBRC 13948 / NRRL B-527 / VKM B-1787 / 2291 / W).